A 329-amino-acid polypeptide reads, in one-letter code: Intradiol ring-cleavage dioxygenase hqdA (329 aa).

Tyrosine 167, tyrosine 201, histidine 225, and histidine 227 together coordinate Fe cation.

It belongs to the intradiol ring-cleavage dioxygenase family. As to quaternary structure, homodimer. Fe(3+) serves as cofactor.

The catalysed reaction is catechol + O2 = cis,cis-muconate + 2 H(+). The enzyme catalyses benzene-1,2,4-triol + O2 = maleylacetate + 2 H(+). Intradiol ring-cleavage dioxygenase involved in an alternative pathway to the protocatechuic acid pathway since it is active on hydroxyquinol and catechol but not on protocatechuic acid. The sequence is that of Intradiol ring-cleavage dioxygenase hqdA from Aspergillus niger (strain ATCC MYA-4892 / CBS 513.88 / FGSC A1513).